Here is a 422-residue protein sequence, read N- to C-terminus: Glycine amidinotransferase, mitochondrial (422 aa).

The N-terminal 37 residues, 1–37 (MLRVRCLRGGSRGAEAVHYIGSMLRKSFVGWVQRSFQ), are a transit peptide targeting the mitochondrion. Active-site residues include D253 and H302. Catalysis depends on C406, which acts as the Amidino-cysteine intermediate.

It belongs to the amidinotransferase family. As to quaternary structure, homodimer. In terms of tissue distribution, ubiquitously expressed in adult tissues, with highest levels in muscle and intermediate levels in eye, heart, liver, stomach and testis. In stage 28 embryos, expression is higher in the dorsal and ventral parts of the trunk than in the head. In middle gastrulae, expression is highest around the yolk plug, while in stage 15 and tailbud stage embryos, expression is largely restricted to the region around the presumptive notochord and gut.

It is found in the mitochondrion inner membrane. The catalysed reaction is L-arginine + glycine = guanidinoacetate + L-ornithine. It functions in the pathway amine and polyamine biosynthesis; creatine biosynthesis; creatine from L-arginine and glycine: step 1/2. Functionally, catalyzes the biosynthesis of guanidinoacetate, the immediate precursor of creatine. Creatine plays a vital role in energy metabolism in muscle tissues. May play a role in embryonic and central nervous system development. This Xenopus laevis (African clawed frog) protein is Glycine amidinotransferase, mitochondrial.